We begin with the raw amino-acid sequence, 625 residues long: Acetolactate synthase (625 aa).

The disordered stretch occupies residues 1–29; that stretch reads MSAPTKPHARPQGAGNSVPNTVKPATQFP. Over residues 14–29 the composition is skewed to polar residues; sequence AGNSVPNTVKPATQFP. Glu92 is a binding site for thiamine diphosphate. FAD is bound by residues Arg194, 300 to 321, and 343 to 362; these read HGTVAAVAALQRSDLLIALGTR and DIDPAEIGKNRHADVPIVGD. Positions 436 to 516 are thiamine pyrophosphate binding; the sequence is QHQMWAAQFI…IKVALINNGN (81 aa). Positions 487 and 514 each coordinate Mg(2+).

The protein belongs to the TPP enzyme family. Requires Mg(2+) as cofactor. Thiamine diphosphate is required as a cofactor.

The catalysed reaction is 2 pyruvate + H(+) = (2S)-2-acetolactate + CO2. The protein operates within amino-acid biosynthesis; L-isoleucine biosynthesis; L-isoleucine from 2-oxobutanoate: step 1/4. Its pathway is amino-acid biosynthesis; L-valine biosynthesis; L-valine from pyruvate: step 1/4. This is Acetolactate synthase (ilvB) from Mycobacterium leprae (strain TN).